The chain runs to 388 residues: Processive diacylglycerol beta-glucosyltransferase (388 aa).

The protein belongs to the glycosyltransferase 28 family. UgtP subfamily.

It localises to the cell membrane. The catalysed reaction is a 1,2-diacyl-3-O-(beta-D-glucopyranosyl)-sn-glycerol + UDP-alpha-D-glucose = a 1,2-diacyl-3-O-(beta-D-Glc-(1-&gt;6)-beta-D-Glc)-sn-glycerol + UDP + H(+). It carries out the reaction a 1,2-diacyl-3-O-(beta-D-Glc-(1-&gt;6)-beta-D-Glc)-sn-glycerol + UDP-alpha-D-glucose = a 1,2-diacyl-3-O-(beta-D-Glc-(1-&gt;6)-beta-D-Glc-(1-&gt;6)-beta-D-Glc)-sn-glycerol + UDP + H(+). The enzyme catalyses a 1,2-diacyl-sn-glycerol + UDP-alpha-D-glucose = a 1,2-diacyl-3-O-(beta-D-glucopyranosyl)-sn-glycerol + UDP + H(+). It functions in the pathway glycolipid metabolism; diglucosyl-diacylglycerol biosynthesis. Processive glucosyltransferase involved in the biosynthesis of both the bilayer- and non-bilayer-forming membrane glucolipids. Is able to successively transfer up to three glucosyl residues to diacylglycerol (DAG), thereby catalyzing the formation of beta-monoglucosyl-DAG (3-O-(beta-D-glucopyranosyl)-1,2-diacyl-sn-glycerol), beta-diglucosyl-DAG (3-O-(beta-D-glucopyranosyl-beta-(1-&gt;6)-D-glucopyranosyl)-1,2-diacyl-sn-glycerol) and beta-triglucosyl-DAG (3-O-(beta-D-glucopyranosyl-beta-(1-&gt;6)-D-glucopyranosyl-beta-(1-&gt;6)-D-glucopyranosyl)-1,2-diacyl-sn-glycerol). Beta-diglucosyl-DAG is the predominant glycolipid found in Bacillales and is also used as a membrane anchor for lipoteichoic acid (LTA). The polypeptide is Processive diacylglycerol beta-glucosyltransferase (Bacillus cereus (strain AH187)).